We begin with the raw amino-acid sequence, 376 residues long: Succinyl-diaminopimelate desuccinylase (376 aa).

Residue histidine 64 coordinates Zn(2+). Residue aspartate 66 is part of the active site. Aspartate 97 is a Zn(2+) binding site. The active-site Proton acceptor is glutamate 131. Residues glutamate 132, glutamate 160, and histidine 347 each coordinate Zn(2+).

This sequence belongs to the peptidase M20A family. DapE subfamily. Homodimer. The cofactor is Zn(2+). Requires Co(2+) as cofactor.

The enzyme catalyses N-succinyl-(2S,6S)-2,6-diaminopimelate + H2O = (2S,6S)-2,6-diaminopimelate + succinate. The protein operates within amino-acid biosynthesis; L-lysine biosynthesis via DAP pathway; LL-2,6-diaminopimelate from (S)-tetrahydrodipicolinate (succinylase route): step 3/3. In terms of biological role, catalyzes the hydrolysis of N-succinyl-L,L-diaminopimelic acid (SDAP), forming succinate and LL-2,6-diaminopimelate (DAP), an intermediate involved in the bacterial biosynthesis of lysine and meso-diaminopimelic acid, an essential component of bacterial cell walls. The chain is Succinyl-diaminopimelate desuccinylase from Wigglesworthia glossinidia brevipalpis.